The following is a 696-amino-acid chain: Carotenoid dioxygenase carX (696 aa).

Over residues 1 to 16 the composition is skewed to polar residues; it reads MKFLQQNSFTQTSMSQ. The disordered stretch occupies residues 1–27; sequence MKFLQQNSFTQTSMSQPHEDVSPPLRH. The Fe(2+) site is built by His244, His298, His361, and His642.

It belongs to the carotenoid oxygenase family. Fe(2+) serves as cofactor.

It catalyses the reaction all-trans-beta-carotene + O2 = 2 all-trans-retinal. Its pathway is carotenoid biosynthesis. Its function is as follows. Carotenoid dioxygenase; part of the car gene cluster that mediates the biosynthesis of neurosporaxanthin, a carboxylic apocarotenoid acting as an essential protective pigments and leading to orange pigmentation. CarX mediates the cleavage of beta-carotene produced by carAR into retinal, the rhodopsin's chromophore that is involved in the regulation of the carotenoid biosynthetic pathway via a negative feedback mechanism. It can also convert the synthetic compound beta-apo-8'-carotenal but not C35-apocarotenoids such as the acidic apocarotenoid neurosporaxanthin (C35), as well as its corresponding aldehyde beta-apo-4'-carotenal. In Gibberella fujikuroi (strain CBS 195.34 / IMI 58289 / NRRL A-6831) (Bakanae and foot rot disease fungus), this protein is Carotenoid dioxygenase carX.